Here is a 223-residue protein sequence, read N- to C-terminus: SCMKAAPMKEVSIRGQGSLAYPGLRTQGNLGTLGGPNDATRGLTSLADTFEHVIEELLDEQQVIQPSKENKDADLYSSRVMLSSQVPLEPPLLFLLEEYKNYLDAANMSMRVRRHSDPARRGELSVCDSTSEWVTAAEKKTAVDMSGATVTVLEKVPVPKGQLKQYFYETKCSSKGYAKEGCRGIDKRYWNSQCRTTQSYVRALTMDNKKRVGWRFIRIDTSC.

Positions 1–5 are cleaved as a signal peptide; the sequence is SCMKA. The propeptide occupies 6–114; that stretch reads APMKEVSIRG…AANMSMRVRR (109 aa). An N-linked (GlcNAc...) asparagine glycan is attached at Asn-107. Cystine bridges form between Cys-127/Cys-194 and Cys-172/Cys-223.

It belongs to the NGF-beta family.

It localises to the secreted. In terms of biological role, promotes the survival of neuronal populations that are all located either in the central nervous system or directly connected to it. This chain is Neurotrophic factor BDNF precursor form (BDNF), found in Calabaria reinhardtii (Calabar boa).